The following is a 96-amino-acid chain: Large ribosomal subunit protein eL21 (96 aa).

The segment at 1–37 (MPSSNGPMTGTRDKLSNSPRERGMSPPQRAIQEYDEG) is disordered. Residues 11–23 (TRDKLSNSPRERG) show a composition bias toward basic and acidic residues.

It belongs to the eukaryotic ribosomal protein eL21 family.

This chain is Large ribosomal subunit protein eL21, found in Haloquadratum walsbyi (strain DSM 16790 / HBSQ001).